The sequence spans 155 residues: Fibroblast growth factor 1 (155 aa).

A propeptide spanning residues 1 to 15 (MAEGDITTFNAITES) is cleaved from the precursor. Residue asparagine 33 coordinates heparin. The heparin-binding stretch occupies residues 127-143 (KKNGASKKGSRTHYGQK).

Belongs to the heparin-binding growth factors family.

The protein localises to the secreted. The protein resides in the cytoplasm. It localises to the cell cortex. Its subcellular location is the cytosol. It is found in the nucleus. Plays an important role in the regulation of cell survival, cell division, angiogenesis, cell differentiation and cell migration. Functions as a potent mitogen in vitro. Acts as a ligand for FGFR1 and integrins. Binds to FGFR1 in the presence of heparin leading to FGFR1 dimerization and activation via sequential autophosphorylation on tyrosine residues which act as docking sites for interacting proteins, leading to the activation of several signaling cascades. Binds to integrins. Its binding to integrins and subsequent ternary complex formation with integrins and FGFR1 are essential for FGF1 signaling. The polypeptide is Fibroblast growth factor 1 (fgf1) (Xenopus laevis (African clawed frog)).